The primary structure comprises 118 residues: Large ribosomal subunit protein bL20 (118 aa).

It belongs to the bacterial ribosomal protein bL20 family.

Its function is as follows. Binds directly to 23S ribosomal RNA and is necessary for the in vitro assembly process of the 50S ribosomal subunit. It is not involved in the protein synthesizing functions of that subunit. This is Large ribosomal subunit protein bL20 from Thermotoga neapolitana (strain ATCC 49049 / DSM 4359 / NBRC 107923 / NS-E).